Consider the following 367-residue polypeptide: Peptide chain release factor 2 (367 aa).

Glutamine 254 is subject to N5-methylglutamine.

This sequence belongs to the prokaryotic/mitochondrial release factor family. Post-translationally, methylated by PrmC. Methylation increases the termination efficiency of RF2.

The protein localises to the cytoplasm. In terms of biological role, peptide chain release factor 2 directs the termination of translation in response to the peptide chain termination codons UGA and UAA. This Variovorax paradoxus (strain S110) protein is Peptide chain release factor 2.